We begin with the raw amino-acid sequence, 159 residues long: Vasotocin-neurophysin VT (159 aa).

The first 17 residues, 1–17 (TAPVPACFLCLLALSSA), serve as a signal peptide directing secretion. Residues Cys-18 and Cys-23 are joined by a disulfide bond. Gly-26 is subject to Glycine amide. Intrachain disulfides connect Cys-39-Cys-83, Cys-42-Cys-56, Cys-50-Cys-73, Cys-57-Cys-63, Cys-90-Cys-102, Cys-96-Cys-114, and Cys-103-Cys-108. N-linked (GlcNAc...) asparagine glycosylation is present at Asn-129.

It belongs to the vasopressin/oxytocin family. Post-translationally, seven disulfide bonds are present in neurophysin.

The protein resides in the secreted. Functionally, vasotocin is an antidiuretic hormone. This chain is Vasotocin-neurophysin VT, found in Bufo japonicus (Japanese common toad).